The chain runs to 382 residues: Dual-specificity RNA methyltransferase RlmN (382 aa).

The active-site Proton acceptor is the E96. The Radical SAM core domain maps to 102–342; sequence QGKRGTLCVS…VRTTRGEDID (241 aa). The cysteines at positions 109 and 345 are disulfide-linked. Positions 116, 120, and 123 each coordinate [4Fe-4S] cluster. S-adenosyl-L-methionine contacts are provided by residues 170–171, S202, 224–226, and N302; these read GE and SLH. C345 acts as the S-methylcysteine intermediate in catalysis.

It belongs to the radical SAM superfamily. RlmN family. The cofactor is [4Fe-4S] cluster.

The protein resides in the cytoplasm. It catalyses the reaction adenosine(2503) in 23S rRNA + 2 reduced [2Fe-2S]-[ferredoxin] + 2 S-adenosyl-L-methionine = 2-methyladenosine(2503) in 23S rRNA + 5'-deoxyadenosine + L-methionine + 2 oxidized [2Fe-2S]-[ferredoxin] + S-adenosyl-L-homocysteine. The catalysed reaction is adenosine(37) in tRNA + 2 reduced [2Fe-2S]-[ferredoxin] + 2 S-adenosyl-L-methionine = 2-methyladenosine(37) in tRNA + 5'-deoxyadenosine + L-methionine + 2 oxidized [2Fe-2S]-[ferredoxin] + S-adenosyl-L-homocysteine. Its function is as follows. Specifically methylates position 2 of adenine 2503 in 23S rRNA and position 2 of adenine 37 in tRNAs. m2A2503 modification seems to play a crucial role in the proofreading step occurring at the peptidyl transferase center and thus would serve to optimize ribosomal fidelity. In Pseudomonas savastanoi pv. phaseolicola (strain 1448A / Race 6) (Pseudomonas syringae pv. phaseolicola (strain 1448A / Race 6)), this protein is Dual-specificity RNA methyltransferase RlmN.